The following is a 493-amino-acid chain: Membrane-bound lytic murein transglycosylase F (493 aa).

Positions 1-21 (MKRLRFNYLLIGLITVLLALA) are cleaved as a signal peptide. The tract at residues 22–268 (LWPSIPWYGG…RLDEKYLGHV (247 aa)) is non-LT domain. An LT domain region spans residues 269–493 (GTFDYVDTRT…LNPVSALPLP (225 aa)). Residue Glu-313 is part of the active site.

It in the N-terminal section; belongs to the bacterial solute-binding protein 3 family. This sequence in the C-terminal section; belongs to the transglycosylase Slt family.

It is found in the cell outer membrane. The enzyme catalyses Exolytic cleavage of the (1-&gt;4)-beta-glycosidic linkage between N-acetylmuramic acid (MurNAc) and N-acetylglucosamine (GlcNAc) residues in peptidoglycan, from either the reducing or the non-reducing ends of the peptidoglycan chains, with concomitant formation of a 1,6-anhydrobond in the MurNAc residue.. Murein-degrading enzyme that degrades murein glycan strands and insoluble, high-molecular weight murein sacculi, with the concomitant formation of a 1,6-anhydromuramoyl product. Lytic transglycosylases (LTs) play an integral role in the metabolism of the peptidoglycan (PG) sacculus. Their lytic action creates space within the PG sacculus to allow for its expansion as well as for the insertion of various structures such as secretion systems and flagella. This is Membrane-bound lytic murein transglycosylase F from Erwinia tasmaniensis (strain DSM 17950 / CFBP 7177 / CIP 109463 / NCPPB 4357 / Et1/99).